A 461-amino-acid polypeptide reads, in one-letter code: Bifunctional protein GlmU (461 aa).

The pyrophosphorylase stretch occupies residues 1 to 235; sequence MTDTRKQRAA…EDDLIGCDSK (235 aa). UDP-N-acetyl-alpha-D-glucosamine is bound by residues 13 to 16, K27, Q80, 85 to 86, 108 to 110, G146, E161, and N176; these read LAAG, GT, and YGD. D110 contributes to the Mg(2+) binding site. The segment at 236-256 is linker; the sequence is ADLAEAEAIFQQKRRRALMEA. The tract at residues 257–461 is N-acetyltransferase; the sequence is GVTMVAPETV…ARTTDQNKKG (205 aa). Positions 322 and 340 each coordinate UDP-N-acetyl-alpha-D-glucosamine. The Proton acceptor role is filled by H352. 2 residues coordinate UDP-N-acetyl-alpha-D-glucosamine: Y355 and N366. Acetyl-CoA-binding positions include A369, 375 to 376, S394, S412, and R429; that span reads NY.

This sequence in the N-terminal section; belongs to the N-acetylglucosamine-1-phosphate uridyltransferase family. The protein in the C-terminal section; belongs to the transferase hexapeptide repeat family. As to quaternary structure, homotrimer. The cofactor is Mg(2+).

The protein localises to the cytoplasm. It catalyses the reaction alpha-D-glucosamine 1-phosphate + acetyl-CoA = N-acetyl-alpha-D-glucosamine 1-phosphate + CoA + H(+). It carries out the reaction N-acetyl-alpha-D-glucosamine 1-phosphate + UTP + H(+) = UDP-N-acetyl-alpha-D-glucosamine + diphosphate. The protein operates within nucleotide-sugar biosynthesis; UDP-N-acetyl-alpha-D-glucosamine biosynthesis; N-acetyl-alpha-D-glucosamine 1-phosphate from alpha-D-glucosamine 6-phosphate (route II): step 2/2. It functions in the pathway nucleotide-sugar biosynthesis; UDP-N-acetyl-alpha-D-glucosamine biosynthesis; UDP-N-acetyl-alpha-D-glucosamine from N-acetyl-alpha-D-glucosamine 1-phosphate: step 1/1. It participates in bacterial outer membrane biogenesis; LPS lipid A biosynthesis. Functionally, catalyzes the last two sequential reactions in the de novo biosynthetic pathway for UDP-N-acetylglucosamine (UDP-GlcNAc). The C-terminal domain catalyzes the transfer of acetyl group from acetyl coenzyme A to glucosamine-1-phosphate (GlcN-1-P) to produce N-acetylglucosamine-1-phosphate (GlcNAc-1-P), which is converted into UDP-GlcNAc by the transfer of uridine 5-monophosphate (from uridine 5-triphosphate), a reaction catalyzed by the N-terminal domain. This chain is Bifunctional protein GlmU, found in Hyphomonas neptunium (strain ATCC 15444).